The following is a 518-amino-acid chain: Squalene monooxygenase 1,2 (518 aa).

2 consecutive transmembrane segments (helical) span residues 3-23 (MAFV…WTIF) and 48-68 (GPDV…YALA). FAD-binding positions include 58–59 (VG), 78–79 (ER), Arg86, Phe91, Arg158, Val174, Asp337, and Met350. The helical transmembrane segment at 448 to 468 (LFYHLFVISLSSIGQLLSPFP) threads the bilayer.

This sequence belongs to the squalene monooxygenase family. It depends on FAD as a cofactor.

It localises to the membrane. The catalysed reaction is squalene + reduced [NADPH--hemoprotein reductase] + O2 = (S)-2,3-epoxysqualene + oxidized [NADPH--hemoprotein reductase] + H2O + H(+). It participates in terpene metabolism; lanosterol biosynthesis; lanosterol from farnesyl diphosphate: step 2/3. Its function is as follows. Catalyzes the stereospecific oxidation of squalene to (S)-2,3-epoxysqualene, and is considered to be a rate-limiting enzyme in steroid biosynthesis. In Brassica napus (Rape), this protein is Squalene monooxygenase 1,2 (SQP1,2).